The sequence spans 52 residues: MEAVKEKNDLFNLDVKVNAKESNDSGAEPRIASKFICTPGCAKTGSFNSYCC.

Positions 1 to 30 (MEAVKEKNDLFNLDVKVNAKESNDSGAEPR) are excised as a propeptide. The segment at residues 33 to 37 (SKFIC) is a cross-link (lanthionine (Ser-Cys)). The segment at residues 38 to 41 (TPGC) is a cross-link (beta-methyllanthionine (Thr-Cys)). Position 44 is a (Z)-2,3-didehydrobutyrine (T44). Residues 46–51 (SFNSYC) constitute a cross-link (lanthionine (Ser-Cys)). Positions 49–52 (SYCC) form a cross-link, S-(2-aminovinyl)-D-cysteine (Ser-Cys).

Belongs to the type A lantibiotic family. Maturation of lantibiotics involves the enzymatic conversion of Thr, and Ser into dehydrated AA and the formation of thioether bonds with cysteine. The C-terminal lanthionine undergoes decarboxylation. This is followed by membrane translocation and cleavage of the modified precursor. In terms of processing, the 2,3-didehydrobutyrine is determined to be the Z-isomer.

In terms of biological role, lanthionine-containing peptide antibiotic (lantibiotic) active on Gram-positive bacteria. The bactericidal activity of lantibiotics is based on depolarization of energized bacterial cytoplasmic membranes, initiated by the formation of aqueous transmembrane pores. In Staphylococcus epidermidis, this protein is Lantibiotic epidermin (epiA).